Here is a 436-residue protein sequence, read N- to C-terminus: T-box transcription factor TBX6 (436 aa).

Residues 67–87 form a disordered region; sequence PLLPSALGPETAPPPPEALHS. Positions 100–273 form a DNA-binding region, T-box; sequence LWKEFSAVGT…ANPFAKGFRE (174 aa). Basic and acidic residues predominate over residues 275-284; the sequence is GRNCKRERDA. 2 disordered regions span residues 275 to 344 and 360 to 383; these read GRNC…CGGP and PSHL…APYS. Positions 332–344 are enriched in low complexity; sequence EAASASAPPCGGP.

It localises to the nucleus. T-box transcription factor that plays an essential role in the determination of the fate of axial stem cells: neural vs mesodermal. Acts in part by down-regulating, a specific enhancer (N1) of SOX2, to inhibit neural development. Seems to also play an essential role in left/right axis determination and acts through effects on Notch signaling around the node as well as through an effect on the morphology and motility of the nodal cilia. This chain is T-box transcription factor TBX6 (Tbx6), found in Rattus norvegicus (Rat).